The chain runs to 728 residues: 1,4-alpha-glucan branching enzyme GlgB (728 aa).

D405 acts as the Nucleophile in catalysis. The active-site Proton donor is the E458.

Belongs to the glycosyl hydrolase 13 family. GlgB subfamily. In terms of assembly, monomer.

The enzyme catalyses Transfers a segment of a (1-&gt;4)-alpha-D-glucan chain to a primary hydroxy group in a similar glucan chain.. It functions in the pathway glycan biosynthesis; glycogen biosynthesis. In terms of biological role, catalyzes the formation of the alpha-1,6-glucosidic linkages in glycogen by scission of a 1,4-alpha-linked oligosaccharide from growing alpha-1,4-glucan chains and the subsequent attachment of the oligosaccharide to the alpha-1,6 position. This chain is 1,4-alpha-glucan branching enzyme GlgB, found in Salmonella arizonae (strain ATCC BAA-731 / CDC346-86 / RSK2980).